We begin with the raw amino-acid sequence, 372 residues long: Cell division protein FtsZ 1 (372 aa).

GTP is bound by residues 51–55 (GAGCN), 138–140 (GTG), Glu169, Arg173, and Asp216. The tract at residues 352–372 (EETPAPSEEETTPVKIDIPEL) is disordered.

Belongs to the FtsZ family. As to quaternary structure, homodimer. Polymerizes to form a dynamic ring structure in a strictly GTP-dependent manner. Interacts directly with several other division proteins.

It is found in the cytoplasm. Essential cell division protein that forms a contractile ring structure (Z ring) at the future cell division site. The regulation of the ring assembly controls the timing and the location of cell division. One of the functions of the FtsZ ring is to recruit other cell division proteins to the septum to produce a new cell wall between the dividing cells. Binds GTP and shows GTPase activity. The polypeptide is Cell division protein FtsZ 1 (Pyrococcus horikoshii (strain ATCC 700860 / DSM 12428 / JCM 9974 / NBRC 100139 / OT-3)).